Consider the following 181-residue polypeptide: Small ribosomal subunit protein cS23 (181 aa).

Residues 1 to 40 (MLPMSVHPATTPALASRPRVSLPRPSTPSSSSSLVHLKSR) are disordered. Residues 14-36 (LASRPRVSLPRPSTPSSSSSLVH) show a composition bias toward low complexity.

It belongs to the chloroplast-specific ribosomal protein cS23 family. Part of the 30S ribosomal subunit.

Its subcellular location is the plastid. The protein resides in the chloroplast. Its function is as follows. Component of the chloroplast ribosome (chloro-ribosome), a dedicated translation machinery responsible for the synthesis of chloroplast genome-encoded proteins, including proteins of the transcription and translation machinery and components of the photosynthetic apparatus. The chain is Small ribosomal subunit protein cS23 (PSRP3) from Hordeum vulgare (Barley).